The chain runs to 229 residues: Large ribosomal subunit protein uL1 (229 aa).

In terms of assembly, part of the 50S ribosomal subunit.

Its function is as follows. Binds directly to 23S rRNA. The L1 stalk is quite mobile in the ribosome, and is involved in E site tRNA release. Protein L1 is also a translational repressor protein, it controls the translation of the L11 operon by binding to its mRNA. This chain is Large ribosomal subunit protein uL1, found in Rhodopseudomonas palustris (strain ATCC BAA-98 / CGA009).